We begin with the raw amino-acid sequence, 228 residues long: UPF0173 metal-dependent hydrolase Smar_0891 (228 aa).

The protein belongs to the UPF0173 family.

This chain is UPF0173 metal-dependent hydrolase Smar_0891, found in Staphylothermus marinus (strain ATCC 43588 / DSM 3639 / JCM 9404 / F1).